The following is a 355-amino-acid chain: Arginine kinase (355 aa).

In terms of domain architecture, Phosphagen kinase N-terminal spans 6–90 (TLEKLEAGFS…FDPIIEDYHN (85 aa)). 63-67 (GVGIY) serves as a coordination point for substrate. In terms of domain architecture, Phosphagen kinase C-terminal spans 118-355 (FVVSTRVRCG…AELIKIEKSL (238 aa)). ATP-binding positions include 121 to 125 (STRVR) and histidine 184. Glutamate 224 contributes to the substrate binding site. Arginine 228 is a binding site for ATP. Cysteine 270 contributes to the substrate binding site. Residues 279–283 (RASVH) and 308–313 (RGTRGE) each bind ATP. Glutamate 313 provides a ligand contact to substrate.

Belongs to the ATP:guanido phosphotransferase family.

The catalysed reaction is L-arginine + ATP = N(omega)-phospho-L-arginine + ADP + H(+). This is Arginine kinase (ARGK) from Plodia interpunctella (Indianmeal moth).